Here is a 313-residue protein sequence, read N- to C-terminus: uncharacterized protein (313 aa).

Disordered stretches follow at residues 24–53 and 190–291; these read EEGEDMRSGAGSGGHHDDYFLESNRSPTPN and TALS…PCAR. Residues 211–229 show a composition bias toward polar residues; it reads TQNYVLKLQLSSPNSQPMS. Residues 239–260 are compositionally biased toward low complexity; the sequence is SCSSSNCSSSSSSSACSSVSIS. Over residues 261–284 the composition is skewed to polar residues; sequence DPNNITAYETNNVNPQFPSNQPLD.

This is an uncharacterized protein from Saccharomyces cerevisiae (strain ATCC 204508 / S288c) (Baker's yeast).